The chain runs to 1129 residues: CRISPR-associated endonuclease Cas12b (1129 aa).

Residues 1–14 (MAVKSIKVKLRLDD) form a WED-I (OBD-I) domain region. Residues 4–9 (KSIKVK) form a binds sgRNA region. The interval 15–386 (MPEIRAGLWK…FATFTLPDAT (372 aa)) is REC1 (Helical-1)domain. Binds DNA protospacer adjacent motif (PAM) on target DNA stretches follow at residues 118-122 (QQIAR) and 143-144 (GN). Residues 387 to 518 (AHPIWTRFDK…QSQSEARGER (132 aa)) form a WED-II (OBD-II) domain region. A binds sgRNA region spans residues 442 to 446 (SMSEQ). The tract at residues 519 to 628 (RPPYAAVFRL…LLKLPGETES (110 aa)) is ruvC-I domain. Aspartate 570 (for DNase activity of RuvC domain) is an active-site residue. Residues 573-574 (LR) form a binds non-target ssDNA region. The interval 629–658 (KDLRAIREERQRTLRQLRTQLAYLRLLVRC) is bridge helix domain. The segment at 659–784 (GSEDVGRRER…SFFGKVSGQV (126 aa)) is REC2 (Helical-II) domain. Binds sgRNA stretches follow at residues 742 to 746 (RPKIR), 753 to 754 (VG), 792 to 796 (RFAIT), 800 to 819 (HIDHAKEDRLKKLADRIIME), and 835 to 839 (WVAKY). The tract at residues 785–900 (IRAEKGSRFA…GTMYAAFSSR (116 aa)) is ruvC-II domain. Glutamate 848 serves as the catalytic For DNase activity of RuvC domain. Positions 897–900 (FSSR) are binds non-target ssDNA. Phosphate contacts are provided by serine 899 and arginine 911. The nuc-I domain stretch occupies residues 901 to 974 (FDARTGAPGI…SAEEGDFHQI (74 aa)). A binds sgRNA region spans residues 973–978 (QIHADL). The interval 975-993 (HADLNAAQNLQQRLWSDFD) is ruvC-III domain. Aspartate 977 functions as the For DNase activity of RuvC domain in the catalytic mechanism. The nuc-II domain stretch occupies residues 994-1129 (ISQIRLRCDW…DSACENTGDI (136 aa)).

It belongs to the CRISPR-associated endonuclease Cas12b family. As to quaternary structure, monomer. It depends on a divalent metal cation as a cofactor.

CRISPR (clustered regularly interspaced short palindromic repeat), is an adaptive immune system that provides protection against mobile genetic elements (viruses, transposable elements and conjugative plasmids). CRISPR clusters contain sequences complementary to antecedent mobile elements and target invading nucleic acids. CRISPR clusters are transcribed and processed into CRISPR RNA (crRNA). In type II CRISPR systems correct processing of pre-crRNA requires a trans-encoded small RNA (tracrRNA), endogenous ribonuclease 3 (rnc) and this protein. The tracrRNA serves as a guide for ribonuclease 3-aided processing of pre-crRNA. Protein-crRNA-tracrRNA endonucleolytically cleave dsDNA target complementary to the spacer; protein is inactive in the absence of crRNA homologous to the target and tracrRNA. Recognizes a short motif in the CRISPR repeat sequences (the 5' PAM or protospacer adjacent motif, TTN in this organism) to help distinguish self versus nonself, as targets within the bacterial CRISPR locus do not have PAMs. PAM recognition is also required for catalytic activity. Cleavage results in staggered 6-8 base 5'-overhangs 14-17 and 23-24 bases downstream of the PAM (protospacer adjacent motif) on the non-target and target strands respectively. Both target and non-target strand DNA are probably independently cleaved in the same active site. This is CRISPR-associated endonuclease Cas12b from Alicyclobacillus acidoterrestris (strain ATCC 49025 / DSM 3922 / CIP 106132 / NCIMB 13137 / GD3B).